Here is a 196-residue protein sequence, read N- to C-terminus: ATP-dependent Clp protease proteolytic subunit (196 aa).

Ser98 acts as the Nucleophile in catalysis. The active site involves His123.

This sequence belongs to the peptidase S14 family. As to quaternary structure, fourteen ClpP subunits assemble into 2 heptameric rings which stack back to back to give a disk-like structure with a central cavity, resembling the structure of eukaryotic proteasomes.

It localises to the cytoplasm. The catalysed reaction is Hydrolysis of proteins to small peptides in the presence of ATP and magnesium. alpha-casein is the usual test substrate. In the absence of ATP, only oligopeptides shorter than five residues are hydrolyzed (such as succinyl-Leu-Tyr-|-NHMec, and Leu-Tyr-Leu-|-Tyr-Trp, in which cleavage of the -Tyr-|-Leu- and -Tyr-|-Trp bonds also occurs).. Its function is as follows. Cleaves peptides in various proteins in a process that requires ATP hydrolysis. Has a chymotrypsin-like activity. Plays a major role in the degradation of misfolded proteins. This chain is ATP-dependent Clp protease proteolytic subunit, found in Limosilactobacillus fermentum (strain NBRC 3956 / LMG 18251) (Lactobacillus fermentum).